Reading from the N-terminus, the 262-residue chain is Polyamine aminopropyltransferase (262 aa).

Residues Met-1–Pro-249 enclose the PABS domain. An S-methyl-5'-thioadenosine-binding site is contributed by Asn-29. Asp-83 lines the spermidine pocket. The Proton acceptor role is filled by Asp-155.

Belongs to the spermidine/spermine synthase family. As to quaternary structure, homodimer or homotetramer.

The protein localises to the cytoplasm. It catalyses the reaction S-adenosyl 3-(methylsulfanyl)propylamine + putrescine = S-methyl-5'-thioadenosine + spermidine + H(+). The protein operates within amine and polyamine biosynthesis; spermidine biosynthesis; spermidine from putrescine: step 1/1. Its function is as follows. Catalyzes the irreversible transfer of a propylamine group from the amino donor S-adenosylmethioninamine (decarboxy-AdoMet) to putrescine (1,4-diaminobutane) to yield spermidine. The sequence is that of Polyamine aminopropyltransferase from Helicobacter pylori (strain HPAG1).